We begin with the raw amino-acid sequence, 400 residues long: Transcription initiation factor IIF subunit beta (400 aa).

Residues 1-19 are compositionally biased toward polar residues; it reads MSSGSAGAPALSNNSTNSV. The tract at residues 1 to 47 is disordered; it reads MSSGSAGAPALSNNSTNSVAKEKSGNISGDEYLSQEEEVFDGNDIEN. Residues Ser-28, Ser-34, and Ser-56 each carry the phosphoserine modification. A compositionally biased stretch (acidic residues) spans 33-47; it reads LSQEEEVFDGNDIEN. 2 disordered regions span residues 165–194 and 366–400; these read QERE…VMTD and TLGE…EDVV. Positions 174 to 189 are enriched in basic residues; the sequence is KQQQQKRRNNRKKFNH. Acidic residues predominate over residues 386 to 400; it reads AEADLEDEIEMEDVV.

This sequence belongs to the TFIIF beta subunit family. In terms of assembly, TFIIF is composed of three different subunits: TFG1/RAP74, TFG2/RAP30 and TAF14.

It is found in the nucleus. TFIIF is a general transcription initiation factor that binds to RNA polymerase II. Its functions include the recruitment of RNA polymerase II to the promoter bound DNA-TBP-TFIIB complex, decreasing the affinity of RNA polymerase II for non-specific DNA, allowing for the subsequent recruitment of TFIIE and TFIIH, and facilitating RNA polymerase II elongation. The polypeptide is Transcription initiation factor IIF subunit beta (TFG2) (Saccharomyces cerevisiae (strain ATCC 204508 / S288c) (Baker's yeast)).